Reading from the N-terminus, the 284-residue chain is Bifunctional protein FolD 2 (284 aa).

NADP(+) contacts are provided by residues 166-168 and Ile-232; that span reads GAS.

The protein belongs to the tetrahydrofolate dehydrogenase/cyclohydrolase family. Homodimer.

The enzyme catalyses (6R)-5,10-methylene-5,6,7,8-tetrahydrofolate + NADP(+) = (6R)-5,10-methenyltetrahydrofolate + NADPH. It catalyses the reaction (6R)-5,10-methenyltetrahydrofolate + H2O = (6R)-10-formyltetrahydrofolate + H(+). It functions in the pathway one-carbon metabolism; tetrahydrofolate interconversion. Catalyzes the oxidation of 5,10-methylenetetrahydrofolate to 5,10-methenyltetrahydrofolate and then the hydrolysis of 5,10-methenyltetrahydrofolate to 10-formyltetrahydrofolate. The protein is Bifunctional protein FolD 2 of Colwellia psychrerythraea (strain 34H / ATCC BAA-681) (Vibrio psychroerythus).